Reading from the N-terminus, the 400-residue chain is NADH-quinone oxidoreductase subunit D (400 aa).

This sequence belongs to the complex I 49 kDa subunit family. In terms of assembly, NDH-1 is composed of 14 different subunits. Subunits NuoB, C, D, E, F, and G constitute the peripheral sector of the complex.

It is found in the cell inner membrane. The catalysed reaction is a quinone + NADH + 5 H(+)(in) = a quinol + NAD(+) + 4 H(+)(out). In terms of biological role, NDH-1 shuttles electrons from NADH, via FMN and iron-sulfur (Fe-S) centers, to quinones in the respiratory chain. The immediate electron acceptor for the enzyme in this species is believed to be a menaquinone. Couples the redox reaction to proton translocation (for every two electrons transferred, four hydrogen ions are translocated across the cytoplasmic membrane), and thus conserves the redox energy in a proton gradient. This Chlorobium phaeobacteroides (strain DSM 266 / SMG 266 / 2430) protein is NADH-quinone oxidoreductase subunit D.